The chain runs to 355 residues: MTARLRPELAGLPVYVPGKNVPGSIKLASNETVYGPLPSVHAAIERAVAVVNRYPDNACVDLKAALAMHLGSDVAPEQIAVGSGSVTLCQQLVQITSAAGDEVMMGWRSFECYLPIVQVAGAIAVKVPLREHTYDLDAMLAAITDRTRLIFVCNPNNPTSTVVDPDALVRFVDAVPADILIAIDEAYVEYIRDGLLPNSLELALSRSNVVVLRTFSKAYGLAGLRVGYAIGHPELITALDKVVMPFAVTNVAQAAAIASLEASGELMARTDALVAERTRVSTALRDAGFELPPSQANFLWLPLGSRTEDFVQEAANARLVVRPFASEGVRVTIGAPAENDALLQFACDWIARTER.

An N6-(pyridoxal phosphate)lysine modification is found at K217.

Belongs to the class-II pyridoxal-phosphate-dependent aminotransferase family. In terms of assembly, homodimer. It depends on pyridoxal 5'-phosphate as a cofactor.

The catalysed reaction is an aromatic L-alpha-amino acid + 2-oxoglutarate = an aromatic oxo-acid + L-glutamate. In terms of biological role, aminotransferase that catalyzes the conversion of aromatic amino acids and 2-oxoglutarate into corresponding aromatic oxo acids and L-glutamate. In Mycolicibacterium paratuberculosis (strain ATCC BAA-968 / K-10) (Mycobacterium paratuberculosis), this protein is Aromatic amino acid aminotransferase.